The following is an 810-amino-acid chain: Phenylalanine--tRNA ligase beta subunit (810 aa).

The 113-residue stretch at 39 to 151 (RTWAAGVVVG…AGLQAGQPVG (113 aa)) folds into the tRNA-binding domain. Residues 408–494 (EPEHSITLRL…RLYGYDNFGE (87 aa)) enclose the B5 domain. 4 residues coordinate Mg(2+): Asp472, Asp478, Glu481, and Glu482. An FDX-ACB domain is found at 716–809 (SSFPASDRDL…LVERFRVTLR (94 aa)).

Belongs to the phenylalanyl-tRNA synthetase beta subunit family. Type 1 subfamily. As to quaternary structure, tetramer of two alpha and two beta subunits. The cofactor is Mg(2+).

It is found in the cytoplasm. It carries out the reaction tRNA(Phe) + L-phenylalanine + ATP = L-phenylalanyl-tRNA(Phe) + AMP + diphosphate + H(+). This is Phenylalanine--tRNA ligase beta subunit (pheT) from Synechococcus elongatus (strain ATCC 33912 / PCC 7942 / FACHB-805) (Anacystis nidulans R2).